We begin with the raw amino-acid sequence, 428 residues long: Glutamine synthetase, chloroplastic (428 aa).

The transit peptide at 1–49 (MAQILAASPTCQMRLTKPSSIASSKLWNSVVLKQKKQSSSKVRSFKVMA) directs the protein to the chloroplast. Residues 75-155 (IIAEYIWIGG…VICDTYTPAG (81 aa)) enclose the GS beta-grasp domain. Residues 94-120 (RTLEKPVEDPSELPKWNYDGSSTGQAP) form a disordered region. Residue Ser104 is modified to Phosphoserine. The GS catalytic domain maps to 159–428 (PTNKRARAAE…LAAQKLSLKV (270 aa)).

The protein belongs to the glutamine synthetase family. As to quaternary structure, homooctamer.

It is found in the plastid. It localises to the chloroplast. It carries out the reaction L-glutamate + NH4(+) + ATP = L-glutamine + ADP + phosphate + H(+). Functionally, the light-modulated chloroplast enzyme, encoded by a nuclear gene and expressed primarily in leaves, is responsible for the reassimilation of the ammonia generated by photorespiration. The protein is Glutamine synthetase, chloroplastic (GLN2) of Brassica napus (Rape).